A 265-amino-acid polypeptide reads, in one-letter code: Hydroxyethylthiazole kinase (265 aa).

Met-55 is a substrate binding site. Positions 130 and 176 each coordinate ATP. Gly-203 is a binding site for substrate.

Belongs to the Thz kinase family. Mg(2+) serves as cofactor.

It catalyses the reaction 5-(2-hydroxyethyl)-4-methylthiazole + ATP = 4-methyl-5-(2-phosphooxyethyl)-thiazole + ADP + H(+). Its pathway is cofactor biosynthesis; thiamine diphosphate biosynthesis; 4-methyl-5-(2-phosphoethyl)-thiazole from 5-(2-hydroxyethyl)-4-methylthiazole: step 1/1. Functionally, catalyzes the phosphorylation of the hydroxyl group of 4-methyl-5-beta-hydroxyethylthiazole (THZ). The sequence is that of Hydroxyethylthiazole kinase from Leptospira interrogans serogroup Icterohaemorrhagiae serovar copenhageni (strain Fiocruz L1-130).